The sequence spans 1322 residues: MNRIDEEPQIHEDPVENREEDDEDEDDQYEFDDGFLVNGSDDGEEEEEQRHCSEKKSRSRRKKDESFTLHEDDYLLLKDNNDTFQRNKYKRLKKSSEEEDKINNDDDDDDLSHFIVDEDDHGAQGMRRKKMKYKQGTDSNALRYANDVFGDPEELLKLRKKDLKYNEKIERKLEDEFEPMVLSEKYMTEKDDEIRKLDVPERMQIFEEAIGIVSLDDMSIQEESNWIYARLLQEQGQGCLINKDDIVKFLEMFHVQKLEIPFIAMYRKEQCRSLLDSSDDDHDGSDFNLDKKLETKWHKVLWMIQDLDRKWVLLRKRKTALFGYYTKRFEEETCMSDLNKSLFESVIKSLQAAETEREVDDVDSKFNLHFPHCEIDEGQYKRPNRKSQYSICSKFGIKEFANKFGYSAEQLGLALSLEKVFVDELEDAKKTPEEMALNYECAMFGDSQAVLKGARHMAAVEISCEPSIRKYVRGIFMENAVVSTSPTPDGNVVIDSFHRFSAVKWLSEKPLRKFDGVQWLLIQKAEEEKLLQVTFKLPENQMNRIISECSEHYLSVGVSKYAQLWNEQRKLILEDAVHGFVLPSMEKEARSLLTSRAKTQLLSEYGQVLWNKVSSGPYRRNNNTSEEEAAPRVLACCWGPGNPETTFVMLDSSGELVDVLYSGSIGLRSRDVNDQKRKKMDQDRFLKFIRDHQPDVLALAAVNLSCVRLKDEIYEAIFQMVEELPLNYVDDRIYDFPLVYADESLPRLYENSRISSEQLPQQAGIVKRAVSLGRYLQNPLAMISTLCGPGRDILSWKLHSFQDFLDPDEKYEMVEQVMVDITNQVGIDINLAASHEWLFSPLQFVSGLGPRKAASLQKSLVRAGSIFVRKELINHGIGKKVFVNAAGFLRIRRSGLACSSSQFIDLLDDTRIHPESYGLAQELAKDVYAHDTVRGDEDDAIEMAIEHVRDEPASLRKIVLDEYLRSKNQENKKETYSLIMRELSCGFQDWRSLFKEVDSDEEFYMISGETKETIGEGRIVQATVKKVTSGKAKCVLDCGLPGILLKEDYSDDGRDIVDLSNKLCEGDIVTCKVKSILKQRYHVLLVCKESEMRKHRNLGDVDDYYHEEKRNSVLIEKEKVPKEKKQFKSRMIVHPRFQNITAEQATVYLSDKNIGESIVRPSSRGLNHLTLMIKISDNVYANKEIIEGEKENKDIVSLQRIGKTLKIGNETFEDLDEVMDRYVDPLVTHLMTMLNHRKFRTGTKSEIDDLLRVEKGVNPKMVVYSFGVSHEHPGSFILSYIRSANPHHEYIGLYPKGFKFRKRMFGDLDKLAAYFKRHIDNQ.

The segment covering 1–17 (MNRIDEEPQIHEDPVEN) has biased composition (basic and acidic residues). 2 disordered regions span residues 1-65 (MNRI…KKDE) and 90-113 (KRLK…DLSH). Residues 18 to 33 (REEDDEDEDDQYEFDD) show a composition bias toward acidic residues. Residues 48–65 (EQRHCSEKKSRSRRKKDE) show a composition bias toward basic and acidic residues. Over residues 97–110 (EEEDKINNDDDDDD) the composition is skewed to acidic residues. The S1 motif domain maps to 1017 to 1088 (GRIVQATVKK…QRYHVLLVCK (72 aa)).

Belongs to the SPT6 family.

The protein resides in the nucleus. In terms of biological role, transcription elongation factor that enhances the transcription elongation by RNA polymerase II (RNAPII). This Arabidopsis thaliana (Mouse-ear cress) protein is Transcription elongation factor SPT6-like.